A 137-amino-acid chain; its full sequence is Small heat shock protein IbpA (137 aa).

The 110-residue stretch at 28–137 folds into the sHSP domain; sequence SQGNGGYPPY…TLKPRRIEIK (110 aa).

The protein belongs to the small heat shock protein (HSP20) family. As to quaternary structure, monomer. Forms homomultimers of about 100-150 subunits at optimal growth temperatures. Conformation changes to monomers at high temperatures or high ionic concentrations.

It is found in the cytoplasm. In terms of biological role, associates with aggregated proteins, together with IbpB, to stabilize and protect them from irreversible denaturation and extensive proteolysis during heat shock and oxidative stress. Aggregated proteins bound to the IbpAB complex are more efficiently refolded and reactivated by the ATP-dependent chaperone systems ClpB and DnaK/DnaJ/GrpE. Its activity is ATP-independent. This is Small heat shock protein IbpA from Serratia proteamaculans (strain 568).